The chain runs to 280 residues: Large ribosomal subunit protein uL2 (280 aa).

Residues 215-280 (GRRPHVRGSA…IQRANDKKEK (66 aa)) form a disordered region.

It belongs to the universal ribosomal protein uL2 family. As to quaternary structure, part of the 50S ribosomal subunit. Forms a bridge to the 30S subunit in the 70S ribosome.

One of the primary rRNA binding proteins. Required for association of the 30S and 50S subunits to form the 70S ribosome, for tRNA binding and peptide bond formation. It has been suggested to have peptidyltransferase activity; this is somewhat controversial. Makes several contacts with the 16S rRNA in the 70S ribosome. The protein is Large ribosomal subunit protein uL2 of Dictyoglomus thermophilum (strain ATCC 35947 / DSM 3960 / H-6-12).